A 93-amino-acid polypeptide reads, in one-letter code: Large ribosomal subunit protein uL23 (93 aa).

This sequence belongs to the universal ribosomal protein uL23 family. In terms of assembly, part of the 50S ribosomal subunit. Contacts protein L29, and trigger factor when it is bound to the ribosome.

Functionally, one of the early assembly proteins it binds 23S rRNA. One of the proteins that surrounds the polypeptide exit tunnel on the outside of the ribosome. Forms the main docking site for trigger factor binding to the ribosome. The sequence is that of Large ribosomal subunit protein uL23 from Campylobacter fetus subsp. fetus (strain 82-40).